The chain runs to 406 residues: Argininosuccinate synthase (406 aa).

Residues 12 to 20 (AYSGGLDTS) and A39 each bind ATP. L-citrulline is bound by residues Y90 and S95. G120 contacts ATP. The L-aspartate site is built by T122, N126, and D127. N126 is a binding site for L-citrulline. L-citrulline-binding residues include R130, S179, S188, E264, and Y276.

This sequence belongs to the argininosuccinate synthase family. Type 1 subfamily. Homotetramer.

It localises to the cytoplasm. The catalysed reaction is L-citrulline + L-aspartate + ATP = 2-(N(omega)-L-arginino)succinate + AMP + diphosphate + H(+). Its pathway is amino-acid biosynthesis; L-arginine biosynthesis; L-arginine from L-ornithine and carbamoyl phosphate: step 2/3. This Citrifermentans bemidjiense (strain ATCC BAA-1014 / DSM 16622 / JCM 12645 / Bem) (Geobacter bemidjiensis) protein is Argininosuccinate synthase.